We begin with the raw amino-acid sequence, 488 residues long: NAD-reducing hydrogenase HoxS subunit beta (488 aa).

4 residues coordinate Ni(2+): Cys62, Cys65, Cys458, and Cys461.

This sequence belongs to the [NiFe]/[NiFeSe] hydrogenase large subunit family. Tetramer of an alpha and a gamma subunits (flavin-containing dimer), and a delta and a nickel-containing beta subunits (hydrogenase dimer). Requires FMN as cofactor. Ni(2+) serves as cofactor.

The protein localises to the cytoplasm. The enzyme catalyses H2 + NAD(+) = NADH + H(+). This is NAD-reducing hydrogenase HoxS subunit beta (hoxH) from Cupriavidus necator (strain ATCC 17699 / DSM 428 / KCTC 22496 / NCIMB 10442 / H16 / Stanier 337) (Ralstonia eutropha).